A 158-amino-acid chain; its full sequence is Transcription elongation factor GreA (158 aa).

The protein belongs to the GreA/GreB family.

In terms of biological role, necessary for efficient RNA polymerase transcription elongation past template-encoded arresting sites. The arresting sites in DNA have the property of trapping a certain fraction of elongating RNA polymerases that pass through, resulting in locked ternary complexes. Cleavage of the nascent transcript by cleavage factors such as GreA or GreB allows the resumption of elongation from the new 3'terminus. GreA releases sequences of 2 to 3 nucleotides. This chain is Transcription elongation factor GreA, found in Ruthia magnifica subsp. Calyptogena magnifica.